The primary structure comprises 271 residues: Monalysin (271 aa).

A propeptide spanning residues 1 to 33 (MTIKEELGQPQSHSIELDEVSKEAASTRAALTS) is cleaved from the precursor. The tract at residues 102-170 (IPQNVTTTLS…FTDTTEMKGP (69 aa)) is pore-forming domain.

As to quaternary structure, pro-Monalysin forms a stable donut-like 18-mer complex composed of two disk-shaped nonamers held together by N-terminal swapping of the pro-peptides. After proteolytic cleavage, the inactive 18-mer complex probably dissociates into two disk-shaped active nonamers in which the transmembrane segments are unmasked and ready to engage the conformational change leading to the pore formation into the target membrane. Multimerizes into circular-like structures and barrel-like aggregates. In terms of processing, requires N-terminal cleavage to become fully active. The metalloprotease AprA can induce the rapid cleavage of pro-Monalysin into its active form. Can also be processed by trypsin.

It is found in the secreted. Its subcellular location is the host cell membrane. Functionally, pore-forming toxin that contributes to the virulence of P.entomophila against Drosophila, playing an important role in host intestinal damage and lethality. Displays cytolytic and hemolytic activity. The protein is Monalysin of Pseudomonas entomophila (strain L48).